We begin with the raw amino-acid sequence, 353 residues long: Ferrochelatase (353 aa).

Residues His223 and Glu304 each coordinate Fe cation.

It belongs to the ferrochelatase family.

The protein resides in the cytoplasm. It carries out the reaction heme b + 2 H(+) = protoporphyrin IX + Fe(2+). Its pathway is porphyrin-containing compound metabolism; protoheme biosynthesis; protoheme from protoporphyrin-IX: step 1/1. Catalyzes the ferrous insertion into protoporphyrin IX. The protein is Ferrochelatase of Mesorhizobium japonicum (strain LMG 29417 / CECT 9101 / MAFF 303099) (Mesorhizobium loti (strain MAFF 303099)).